The chain runs to 423 residues: UDP-N-acetylglucosamine 1-carboxyvinyltransferase (423 aa).

A phosphoenolpyruvate-binding site is contributed by 22-23 (KN). Arginine 93 provides a ligand contact to UDP-N-acetyl-alpha-D-glucosamine. Catalysis depends on cysteine 117, which acts as the Proton donor. Cysteine 117 carries the 2-(S-cysteinyl)pyruvic acid O-phosphothioketal modification. Residues 122–126 (RPVDL), aspartate 308, and isoleucine 330 each bind UDP-N-acetyl-alpha-D-glucosamine.

The protein belongs to the EPSP synthase family. MurA subfamily.

Its subcellular location is the cytoplasm. The catalysed reaction is phosphoenolpyruvate + UDP-N-acetyl-alpha-D-glucosamine = UDP-N-acetyl-3-O-(1-carboxyvinyl)-alpha-D-glucosamine + phosphate. The protein operates within cell wall biogenesis; peptidoglycan biosynthesis. Its function is as follows. Cell wall formation. Adds enolpyruvyl to UDP-N-acetylglucosamine. The sequence is that of UDP-N-acetylglucosamine 1-carboxyvinyltransferase from Maricaulis maris (strain MCS10) (Caulobacter maris).